A 369-amino-acid polypeptide reads, in one-letter code: UDP-N-acetylglucosamine--N-acetylmuramyl-(pentapeptide) pyrophosphoryl-undecaprenol N-acetylglucosamine transferase (369 aa).

UDP-N-acetyl-alpha-D-glucosamine contacts are provided by residues 16–18, Asn-130, Arg-171, Ser-203, Ile-253, and Gln-298; that span reads TGG.

The protein belongs to the glycosyltransferase 28 family. MurG subfamily.

It localises to the cell inner membrane. The enzyme catalyses di-trans,octa-cis-undecaprenyl diphospho-N-acetyl-alpha-D-muramoyl-L-alanyl-D-glutamyl-meso-2,6-diaminopimeloyl-D-alanyl-D-alanine + UDP-N-acetyl-alpha-D-glucosamine = di-trans,octa-cis-undecaprenyl diphospho-[N-acetyl-alpha-D-glucosaminyl-(1-&gt;4)]-N-acetyl-alpha-D-muramoyl-L-alanyl-D-glutamyl-meso-2,6-diaminopimeloyl-D-alanyl-D-alanine + UDP + H(+). It functions in the pathway cell wall biogenesis; peptidoglycan biosynthesis. Functionally, cell wall formation. Catalyzes the transfer of a GlcNAc subunit on undecaprenyl-pyrophosphoryl-MurNAc-pentapeptide (lipid intermediate I) to form undecaprenyl-pyrophosphoryl-MurNAc-(pentapeptide)GlcNAc (lipid intermediate II). The chain is UDP-N-acetylglucosamine--N-acetylmuramyl-(pentapeptide) pyrophosphoryl-undecaprenol N-acetylglucosamine transferase from Cytophaga hutchinsonii (strain ATCC 33406 / DSM 1761 / CIP 103989 / NBRC 15051 / NCIMB 9469 / D465).